A 130-amino-acid polypeptide reads, in one-letter code: Small ribosomal subunit protein uS9 (130 aa).

This sequence belongs to the universal ribosomal protein uS9 family.

The sequence is that of Small ribosomal subunit protein uS9 from Pseudomonas entomophila (strain L48).